The following is a 672-amino-acid chain: COBRA-like protein 10 (672 aa).

The N-terminal stretch at 1 to 35 (MRAIDVKTGMKIPWDVRYSLSLFIFLSSILFLSNG) is a signal peptide. N-linked (GlcNAc...) asparagine glycosylation is found at Asn79, Asn135, Asn264, Asn328, Asn339, Asn368, Asn422, Asn442, Asn483, Asn562, Asn570, and Asn589. The 106-residue stretch at 502–607 (KLPCPDNCGV…PVPGKQQSVI (106 aa)) folds into the CBM2 domain. The GPI-anchor amidated serine moiety is linked to residue Ser646. Residues 647–672 (SGHRRGISVSMSFVFATIAAFALMMD) constitute a propeptide, removed in mature form. The Required for processing by the PIG complex, a critical step for apical plasma membrane localization in pollen tubes signature appears at 664 to 672 (IAAFALMMD).

It belongs to the COBRA family. In terms of processing, the GPI-anchor attachment at Ser-646 requires APTG1. As to expression, expressed in roots, stems, leaves, flowers and siliques. Specific expression in the pollen tube.

It is found in the cell membrane. The protein localises to the cytoplasm. Its subcellular location is the vesicle. Functionally, involved in the deposition of apical pectin cap and cellulose microfibrils in pollen tubes. Not essential for pollen development, hydration or germination, but required for pollen tubes growth in the female transmitting tract of pistil and toward micropyles, via the perception of ovule guidance cues. The protein is COBRA-like protein 10 of Arabidopsis thaliana (Mouse-ear cress).